We begin with the raw amino-acid sequence, 1406 residues long: DNA-directed RNA polymerase subunit beta' (1406 aa).

Zn(2+) is bound by residues Cys70, Cys72, Cys85, and Cys88. Residues Asp460, Asp462, and Asp464 each coordinate Mg(2+). Zn(2+)-binding residues include Cys814, Cys889, Cys896, and Cys899.

It belongs to the RNA polymerase beta' chain family. As to quaternary structure, the RNAP catalytic core consists of 2 alpha, 1 beta, 1 beta' and 1 omega subunit. When a sigma factor is associated with the core the holoenzyme is formed, which can initiate transcription. Mg(2+) is required as a cofactor. Zn(2+) serves as cofactor.

The catalysed reaction is RNA(n) + a ribonucleoside 5'-triphosphate = RNA(n+1) + diphosphate. DNA-dependent RNA polymerase catalyzes the transcription of DNA into RNA using the four ribonucleoside triphosphates as substrates. This Psychromonas ingrahamii (strain DSM 17664 / CCUG 51855 / 37) protein is DNA-directed RNA polymerase subunit beta'.